A 705-amino-acid polypeptide reads, in one-letter code: Solute carrier family 12 member 8 (705 aa).

Helical transmembrane passes span 38–58, 69–89, 92–112, 121–141, 159–179, 181–201, 232–252, 268–288, 306–326, 368–388, and 390–410; these read FGTW…VVLF, GVLL…ITVL, IGVA…ISSV, VGLL…TGFA, ISVA…KWII, LQLL…VGSF, FFTV…GFNM, LAAV…LGAV, LVGF…CMGG, LVTM…VVTI, and FMLT…AHCG. Residues 472 to 512 are disordered; the sequence is ESRQLGSREGNNPKNQKRKGKKGAKQTLQDSFLLDPGSPLS. Residues 486 to 495 show a composition bias toward basic residues; the sequence is NQKRKGKKGA. Helical transmembrane passes span 587–607 and 612–632; these read WVSL…QWLY and MGVA…LYLG.

Belongs to the SLC12A transporter family.

It localises to the membrane. Functionally, cation/chloride cotransporter that may play a role in the control of keratinocyte proliferation. This is Solute carrier family 12 member 8 (Slc12a8) from Mus musculus (Mouse).